The chain runs to 544 residues: CRISPR-associated endodeoxyribonuclease Cas12f2 (544 aa).

The tract at residues 1–195 (MNMSKTTISV…KPNERETRYV (195 aa)) is recognition domain (REC). The segment at 196 to 326 (HISKLESPSK…YLQYTYEAEV (131 aa)) is wedge domain (WED). The segment at 327–334 (EANKEYAG) is linker. The tract at residues 335–485 (CLGVDIGCSK…VYVKPDYTSQ (151 aa)) is ruvC-I. Active-site residues include Asp-339 and Glu-430. Residues 486–520 (TCSSCGADKEKTERPSQAIFRCLNPTCRYYQRDIN) are target nucleic acid-binding (TNB). Residues Cys-487, Cys-490, Cys-507, and Cys-512 each contribute to the Zn(2+) site. The interval 521–541 (ADFNAAVNIAKKALNNTEVVT) is ruvC-II. The active site involves Asp-522.

It belongs to the CRISPR-associated endonuclease Cas12f family. An asymmetric homodimer. Guide RNA is probably required for dimerization. Requires Mg(2+) as cofactor. It depends on Zn(2+) as a cofactor.

Functionally, CRISPR (clustered regularly interspaced short palindromic repeat), is an adaptive immune system that provides protection against mobile genetic elements (viruses, transposable elements and conjugative plasmids). CRISPR clusters contain sequences complementary to antecedent mobile elements and target invading nucleic acids. CRISPR clusters are transcribed and processed into CRISPR RNA (crRNA), which requires a trans-encoded small RNA (tracrRNA), but not this protein (in vitro). Recognizes a short motif in the CRISPR repeat sequences (the 5' PAM or protospacer adjacent motif, TTAT in this organism) to help distinguish self versus nonself, as targets within the CRISPR locus do not have PAMs. Upon expression in E.coli of this protein, a mini CRISPR array and the probable tracrRNA, has dsDNA endonuclease activity. DNA cleavage is centered around positions 21 base pairs 3' of PAM. The mini system does not protect E.coli against transformation by foreign plasmids. The protein is CRISPR-associated endodeoxyribonuclease Cas12f2 of Micrarchaeota archaeon (strain CG1_02_47_40).